A 245-amino-acid chain; its full sequence is 1-(5-phosphoribosyl)-5-[(5-phosphoribosylamino)methylideneamino] imidazole-4-carboxamide isomerase (245 aa).

D8 acts as the Proton acceptor in catalysis. D129 (proton donor) is an active-site residue.

This sequence belongs to the HisA/HisF family.

The protein localises to the cytoplasm. The enzyme catalyses 1-(5-phospho-beta-D-ribosyl)-5-[(5-phospho-beta-D-ribosylamino)methylideneamino]imidazole-4-carboxamide = 5-[(5-phospho-1-deoxy-D-ribulos-1-ylimino)methylamino]-1-(5-phospho-beta-D-ribosyl)imidazole-4-carboxamide. It functions in the pathway amino-acid biosynthesis; L-histidine biosynthesis; L-histidine from 5-phospho-alpha-D-ribose 1-diphosphate: step 4/9. The polypeptide is 1-(5-phosphoribosyl)-5-[(5-phosphoribosylamino)methylideneamino] imidazole-4-carboxamide isomerase (Rhodopseudomonas palustris (strain BisB5)).